The chain runs to 172 residues: Podoplanin (172 aa).

Residues 1 to 22 form the signal peptide; that stretch reads MWTVPVLFWVLGSVWFWDSAQG. Over 23 to 141 the chain is Extracellular; sequence GTIGVNEDDI…KKDGLPVVTL (119 aa). Residues T37, T51, T52, T53, and T56 are each glycosylated (O-linked (GalNAc...) threonine). The segment at 49-132 is disordered; sequence KITTTGATGG…AGDETQTTDK (84 aa). Positions 51–63 are enriched in polar residues; the sequence is TTTGATGGLNEST. N60 carries N-linked (GlcNAc...) asparagine glycosylation. O-linked (GalNAc...) threonine glycans are attached at residues T63, T71, and T77. The segment covering 72–81 has biased composition (basic and acidic residues); the sequence is QRERGTKPPL. O-linked (GalNAc...) serine glycosylation occurs at S85. O-linked (GalNAc...) threonine glycosylation occurs at T86. The O-linked (GalNAc...) serine glycan is linked to S87. A glycan (O-linked (GalNAc...) threonine) is linked at T89. O-linked (GalNAc...) serine glycosylation is present at S90. Residues 90–99 are compositionally biased toward basic and acidic residues; that stretch reads SDHDHREHES. 5 O-linked (GalNAc...) threonine glycosylation sites follow: T100, T101, T102, T107, and T115. A compositionally biased stretch (low complexity) spans 100–109; it reads TTTVKVVTSH. The segment covering 110-132 has biased composition (basic and acidic residues); it reads SVDKKTSHPNRDNAGDETQTTDK. The helical transmembrane segment at 142-162 threads the bilayer; that stretch reads VGIIVGVLLAIGFVGGIFIVV. A requires for dimerization and lipidd rafts association region spans residues 143–147; the sequence is GIIVG. Residues 163–172 are Cytoplasmic-facing; it reads MKKISGRFSP. The interval 164 to 165 is requires for interaction with MSN and EZR; it reads KK.

The protein belongs to the podoplanin family. As to quaternary structure, homodimer. Interacts with CLEC1B; the interaction is independent of CLEC1B glycosylation and activates CLEC1B; the interaction is dependent of sialic acid on O-glycans. Interacts with CD9; this interaction is homophilic and attenuates platelet aggregation and pulmonary metastasis induced by PDPN. Interacts with LGALS8; the interaction is glycosylation-dependent; may participate in connection of the lymphatic endothelium to the surrounding extracellular matrix. Interacts with HSPA9. Interacts (via extracellular domain) with CD44; this interaction is required for PDPN-mediated directional migration and regulation of lamellipodia extension/stabilization during cell spreading and migration. Interacts (via cytoplasmic domain) with MSN and EZR; activates RHOA and promotes epithelial-mesenchymal transition. Interacts with CCL21; relocalized PDPN to the basolateral membrane. Post-translationally, extensively O-glycosylated. Contains sialic acid residues. O-glycosylation is necessary for platelet aggregation activity. Disialylated at Thr-52; sialic acid is critical for platelet-aggregating activity and for CLEC1B interaction. Phosphorylated by PKA; decreases cell migration. In terms of processing, the N-terminus is blocked. In terms of tissue distribution, detected at high levels in lung and brain, at lower levels in kidney, stomach, liver, spleen and esophagus, and not detected in skin and small intestine. Expressed in epithelial cells of choroid plexus, ependyma, glomerulus and alveolus, in mesothelial cells and in endothelia of lymphatic vessels. Also expressed in stromal cells of peripheral lymphoid tissue and thymic epithelial cells. Detected in carcinoma cell lines and cultured fibroblasts. Expressed at higher levels in colon carcinomas than in normal colon tissue.

The protein resides in the membrane. Its subcellular location is the cell projection. It localises to the lamellipodium membrane. The protein localises to the filopodium membrane. It is found in the microvillus membrane. The protein resides in the ruffle membrane. Its subcellular location is the membrane raft. It localises to the apical cell membrane. The protein localises to the basolateral cell membrane. It is found in the invadopodium. In terms of biological role, mediates effects on cell migration and adhesion through its different partners. During development plays a role in blood and lymphatic vessels separation by binding CLEC1B, triggering CLEC1B activation in platelets and leading to platelet activation and/or aggregation. Interaction with CD9, on the contrary, attenuates platelet aggregation and pulmonary metastasis induced by PDPN. Mediates effects on cell migration and adhesion through its different partners. Through MSN or EZR interaction promotes epithelial-mesenchymal transition (EMT) leading to ERZ phosphorylation and triggering RHOA activation leading to cell migration increase and invasiveness. Interaction with CD44 promotes directional cell migration in epithelial and tumor cells. In lymph nodes (LNs), controls fibroblastic reticular cells (FRCs) adhesion to the extracellular matrix (ECM) and contraction of the actomyosin by maintaining ERM proteins (EZR; MSN and RDX) and MYL9 activation through association with unknown transmembrane proteins. Engagement of CLEC1B by PDPN promotes FRCs relaxation by blocking lateral membrane interactions leading to reduction of ERM proteins (EZR; MSN and RDX) and MYL9 activation. Through binding with LGALS8 may participate in connection of the lymphatic endothelium to the surrounding extracellular matrix. In keratinocytes, induces changes in cell morphology showing an elongated shape, numerous membrane protrusions, major reorganization of the actin cytoskeleton, increased motility and decreased cell adhesion. Controls invadopodia stability and maturation leading to efficient degradation of the extracellular matrix (ECM) in tumor cells through modulation of RHOC activity in order to activate ROCK1/ROCK2 and LIMK1/LIMK2 and inactivation of CFL1. Required for normal lung cell proliferation and alveolus formation at birth. Does not function as a water channel or as a regulator of aquaporin-type water channels. Does not have any effect on folic acid or amino acid transport. This Mus musculus (Mouse) protein is Podoplanin.